Consider the following 216-residue polypeptide: ATP phosphoribosyltransferase (216 aa).

This sequence belongs to the ATP phosphoribosyltransferase family. Short subfamily. In terms of assembly, heteromultimer composed of HisG and HisZ subunits.

Its subcellular location is the cytoplasm. It catalyses the reaction 1-(5-phospho-beta-D-ribosyl)-ATP + diphosphate = 5-phospho-alpha-D-ribose 1-diphosphate + ATP. The protein operates within amino-acid biosynthesis; L-histidine biosynthesis; L-histidine from 5-phospho-alpha-D-ribose 1-diphosphate: step 1/9. In terms of biological role, catalyzes the condensation of ATP and 5-phosphoribose 1-diphosphate to form N'-(5'-phosphoribosyl)-ATP (PR-ATP). Has a crucial role in the pathway because the rate of histidine biosynthesis seems to be controlled primarily by regulation of HisG enzymatic activity. This is ATP phosphoribosyltransferase from Microcystis aeruginosa (strain NIES-843 / IAM M-2473).